Here is a 487-residue protein sequence, read N- to C-terminus: Complement C1r subcomponent-like protein (487 aa).

The first 35 residues, 1–35, serve as a signal peptide directing secretion; that stretch reads MPGPRVWGKYLWRSPHSKGCPGAMWWLLLWGVLQA. A CUB domain is found at 39–163; the sequence is RGSVLLAQEL…KGFLALYQTV (125 aa). C94 and C112 form a disulfide bridge. N-linked (GlcNAc...) asparagine glycosylation is found at N147 and N166. The 66-residue stretch at 165–230 folds into the Sushi domain; it reads VNYSQPISEA…DGEEVLQCMP (66 aa). C195 and C228 are joined by a disulfide. N242 is a glycosylation site (N-linked (GlcNAc...) (complex) asparagine). The Peptidase S1 domain occupies 245 to 484; the sequence is TLGSSRAKLG…YVDWIKGVMN (240 aa). The active-site Charge relay system is the H283. Residue N296 is glycosylated (N-linked (GlcNAc...) asparagine). Residue D339 is the Charge relay system of the active site. N363 carries an N-linked (GlcNAc...) asparagine glycan. Disulfide bonds link C402–C421 and C432–C462. Catalysis depends on S436, which acts as the Charge relay system.

This sequence belongs to the peptidase S1 family. Highly expressed in placenta, liver, kidney, pancreas, moderately in lung, spleen, prostate, ovary, colon, and PBL, and weakly in heart, skeletal muscle, thymus, testis, and small intestine. Expressed in PC-3 (prostate adenocarcinoma) and SK-OV-3 (ovary adenocarcinoma) cells, but not in LoVo and HT-29 (colon adenocarcinoma), SMMC7721 (hepatocellular carcinoma), CaoV-3 (ovary adenocarcinoma), HeLa (cervix epithelioid carcinoma), MCF-7 (breast adenocarcinoma), U-251MG (glioma) or A-549 (lung carcinoma) cells. Widely expressed in myeloid leukemia cell lines, including K-562 (chronic myelogenous leukemia), THP-1 (myelomonocytic leukemia), HL-60 and NB4 (promyelocytic leukemia), and KG-1 (acute myelogenous leukemia) cells. Expressed mainly in the liver and in serum (at protein level).

Its subcellular location is the secreted. Its function is as follows. Mediates the proteolytic cleavage of HP/haptoglobin in the endoplasmic reticulum. This Homo sapiens (Human) protein is Complement C1r subcomponent-like protein (C1RL).